Here is a 266-residue protein sequence, read N- to C-terminus: 4-hydroxy-tetrahydrodipicolinate reductase (266 aa).

10 to 15 (GPRGRM) is an NAD(+) binding site. Lys-38 lines the NADP(+) pocket. NAD(+)-binding positions include 99–101 (GTT) and 125–128 (APNF). Residue His-155 is the Proton donor/acceptor of the active site. Residue His-156 coordinates (S)-2,3,4,5-tetrahydrodipicolinate. Residue Lys-159 is the Proton donor of the active site. (S)-2,3,4,5-tetrahydrodipicolinate is bound at residue 165–166 (GT).

It belongs to the DapB family.

It localises to the cytoplasm. It carries out the reaction (S)-2,3,4,5-tetrahydrodipicolinate + NAD(+) + H2O = (2S,4S)-4-hydroxy-2,3,4,5-tetrahydrodipicolinate + NADH + H(+). It catalyses the reaction (S)-2,3,4,5-tetrahydrodipicolinate + NADP(+) + H2O = (2S,4S)-4-hydroxy-2,3,4,5-tetrahydrodipicolinate + NADPH + H(+). It functions in the pathway amino-acid biosynthesis; L-lysine biosynthesis via DAP pathway; (S)-tetrahydrodipicolinate from L-aspartate: step 4/4. Its function is as follows. Catalyzes the conversion of 4-hydroxy-tetrahydrodipicolinate (HTPA) to tetrahydrodipicolinate. The sequence is that of 4-hydroxy-tetrahydrodipicolinate reductase from Bacillus cereus (strain ATCC 10987 / NRS 248).